The primary structure comprises 662 residues: Methyl-accepting chemotaxis protein TlpB (662 aa).

The Cytoplasmic segment spans residues 1–16 (MGKFIQWIKQPSISKP). A helical transmembrane segment spans residues 17–37 (LIAAFLAVLILPVGVLAYFSY). The Extracellular segment spans residues 38–281 (QSAWNALDRE…LQDASSPVLN (244 aa)). One can recognise a Cache domain in the interval 153-228 (SEPYTDEATG…KPGTTGSGDW (76 aa)). The chain crosses the membrane as a helical span at residues 282–302 (TAVIILCVSIVIGGILILYII). Residues 303–355 (RAITKPLRKLVSTSAKISSGDLTEVIDIHSKNEFGQLGESFNEMSASLRSVIG) enclose the HAMP domain. Residues 303–662 (RAITKPLRKL…DITKKFKIES (360 aa)) lie on the Cytoplasmic side of the membrane. Glutamate 370 is modified (glutamate methyl ester (Glu)). One can recognise a Methyl-accepting transducer domain in the interval 374-610 (SAAQTSKATE…EVSSAVEDIS (237 aa)). Position 594 is a glutamate methyl ester (Gln) (glutamine 594). Residues glutamate 629 and glutamate 636 each carry the glutamate methyl ester (Glu) modification.

Belongs to the methyl-accepting chemotaxis (MCP) protein family.

The protein resides in the cell membrane. Functionally, chemotactic-signal transducers respond to changes in the concentration of attractants and repellents in the environment, transduce a signal from the outside to the inside of the cell, and facilitate sensory adaptation through the variation of the level of methylation. All amino acids serve as attractants in B.subtilis, they appear to cause an increase in the turnover methyl groups, leading to methylation of an unidentified acceptor, while repellents have been shown to cause a decrease in methyl group turnover. The methyl groups are added by a methyltransferase and removed by a methylesterase. The protein is Methyl-accepting chemotaxis protein TlpB (tlpB) of Bacillus subtilis (strain 168).